Reading from the N-terminus, the 200-residue chain is Recombination protein RecR (200 aa).

Residues 57 to 72 form a C4-type zinc finger; it reads CRQCRTLTEDELCPQC. The region spanning 80 to 175 is the Toprim domain; that stretch reads TLLCVVEGPM…ITSRIAHGVP (96 aa).

The protein belongs to the RecR family.

In terms of biological role, may play a role in DNA repair. It seems to be involved in an RecBC-independent recombinational process of DNA repair. It may act with RecF and RecO. This chain is Recombination protein RecR, found in Pseudomonas fluorescens (strain ATCC BAA-477 / NRRL B-23932 / Pf-5).